The chain runs to 77 residues: uncharacterized protein (77 aa).

The 77-residue stretch at Met-1–Trp-77 folds into the Peptidase A1 domain.

This is an uncharacterized protein from Saccharomyces cerevisiae (strain ATCC 204508 / S288c) (Baker's yeast).